A 174-amino-acid polypeptide reads, in one-letter code: U-stichotoxin-Hau2a (174 aa).

An N-terminal signal peptide occupies residues 1–18 (MKPIFIVALLFSTCLVNA). Positions 19 to 33 (KPSINDADIKREPEP) are excised as a propeptide. A Hydroxyproline modification is found at Pro-39. Cystine bridges form between Cys-40–Cys-51 and Cys-43–Cys-58. Residues 61–67 (RKREPEP) constitute a propeptide that is removed on maturation. A Hydroxyproline modification is found at Pro-73. 2 disulfide bridges follow: Cys-74-Cys-85 and Cys-77-Cys-92. The propeptide occupies 95-101 (RKREPEP). Pro-107 carries the hydroxyproline modification. Disulfide bonds link Cys-108-Cys-119 and Cys-111-Cys-126. Residues 129–135 (RKREPEP) constitute a propeptide that is removed on maturation. Pro-141 bears the Hydroxyproline mark. Disulfide bonds link Cys-142–Cys-153 and Cys-145–Cys-160. A propeptide spanning residues 163–174 (RKREPENQDLWS) is cleaved from the precursor.

The protein belongs to the sea anemone BBH family.

It localises to the secreted. The protein localises to the nematocyst. Neurotoxin that paralyzes freshwater crabs at high concentration. This Heteractis aurora (Banded sea anemone) protein is U-stichotoxin-Hau2a.